Here is a 381-residue protein sequence, read N- to C-terminus: Peptidoglycan glycosyltransferase MrdB (381 aa).

The next 10 helical transmembrane spans lie at 11 to 31 (FDLLPFVFIIPLLVVSFLLIF), 40 to 60 (KQGVYYAIGFLLFWVVFFIPF), 66 to 86 (WLFALYWACVILLALVDFMGS), 102 to 122 (ITLQPSEPVKIAILLLLAHLI), 132 to 152 (YDWGMFLKLSFYICLPAALIL), 156 to 176 (DLGTALIVLIMGFGILLIVGL), 180 to 200 (VWLPLLIALIVASPIAYHFLH), 263 to 283 (FGFLGAILLFAIYIGLSLHLF), 297 to 317 (IVALGISILIFVYSSVNIAMT), and 328 to 348 (LPLFSYGGSSFITFMILFAIL).

Belongs to the SEDS family. MrdB/RodA subfamily.

It localises to the cell inner membrane. It carries out the reaction [GlcNAc-(1-&gt;4)-Mur2Ac(oyl-L-Ala-gamma-D-Glu-L-Lys-D-Ala-D-Ala)](n)-di-trans,octa-cis-undecaprenyl diphosphate + beta-D-GlcNAc-(1-&gt;4)-Mur2Ac(oyl-L-Ala-gamma-D-Glu-L-Lys-D-Ala-D-Ala)-di-trans,octa-cis-undecaprenyl diphosphate = [GlcNAc-(1-&gt;4)-Mur2Ac(oyl-L-Ala-gamma-D-Glu-L-Lys-D-Ala-D-Ala)](n+1)-di-trans,octa-cis-undecaprenyl diphosphate + di-trans,octa-cis-undecaprenyl diphosphate + H(+). Its pathway is cell wall biogenesis; peptidoglycan biosynthesis. Peptidoglycan polymerase that is essential for cell wall elongation. The protein is Peptidoglycan glycosyltransferase MrdB of Helicobacter pylori (strain J99 / ATCC 700824) (Campylobacter pylori J99).